The primary structure comprises 316 residues: HPr kinase/phosphorylase (316 aa).

Catalysis depends on residues His143 and Lys164. Gly158–Ser165 serves as a coordination point for ATP. Ser165 is a Mg(2+) binding site. Asp182 serves as the catalytic Proton acceptor; for phosphorylation activity. Proton donor; for dephosphorylation activity. Residues Leu206 to Asn215 are important for the catalytic mechanism of both phosphorylation and dephosphorylation. Residue Glu207 coordinates Mg(2+). Residue Arg251 is part of the active site. The tract at residues Pro272 to Arg277 is important for the catalytic mechanism of dephosphorylation.

Belongs to the HPrK/P family. Homohexamer. The cofactor is Mg(2+).

It catalyses the reaction [HPr protein]-L-serine + ATP = [HPr protein]-O-phospho-L-serine + ADP + H(+). It carries out the reaction [HPr protein]-O-phospho-L-serine + phosphate + H(+) = [HPr protein]-L-serine + diphosphate. In terms of biological role, catalyzes the ATP- as well as the pyrophosphate-dependent phosphorylation of a specific serine residue in HPr, a phosphocarrier protein of the phosphoenolpyruvate-dependent sugar phosphotransferase system (PTS). HprK/P also catalyzes the pyrophosphate-producing, inorganic phosphate-dependent dephosphorylation (phosphorolysis) of seryl-phosphorylated HPr (P-Ser-HPr). This chain is HPr kinase/phosphorylase, found in Xanthomonas euvesicatoria pv. vesicatoria (strain 85-10) (Xanthomonas campestris pv. vesicatoria).